The primary structure comprises 301 residues: Sulfate adenylyltransferase subunit 2 (301 aa).

A disordered region spans residues 279–301 (RQGRMIDHDSSGSMEEKKKQGYF).

It belongs to the PAPS reductase family. CysD subfamily. In terms of assembly, heterodimer composed of CysD, the smaller subunit, and CysN.

The catalysed reaction is sulfate + ATP + H(+) = adenosine 5'-phosphosulfate + diphosphate. Its pathway is sulfur metabolism; hydrogen sulfide biosynthesis; sulfite from sulfate: step 1/3. In terms of biological role, with CysN forms the ATP sulfurylase (ATPS) that catalyzes the adenylation of sulfate producing adenosine 5'-phosphosulfate (APS) and diphosphate, the first enzymatic step in sulfur assimilation pathway. APS synthesis involves the formation of a high-energy phosphoric-sulfuric acid anhydride bond driven by GTP hydrolysis by CysN coupled to ATP hydrolysis by CysD. The chain is Sulfate adenylyltransferase subunit 2 from Marinomonas sp. (strain MWYL1).